A 708-amino-acid polypeptide reads, in one-letter code: Nucleolar protein 11-like (708 aa).

The protein resides in the nucleus. It is found in the nucleolus. In terms of biological role, ribosome biogenesis factor. May be required for both optimal rDNA transcription and pre-rRNA processing. This is Nucleolar protein 11-like (nol11) from Danio rerio (Zebrafish).